The chain runs to 386 residues: SET and MYND domain-containing protein DDB_G0273589 (386 aa).

Residues 6–294 (NGLELKSSEN…KGDQLTISYI (289 aa)) enclose the SET domain. The MYND-type zinc-finger motif lies at 51–94 (CFNCIKQLPSVIKLSLKCNQCNEIWYCNEQCKNENINKHQHYEC). Residues 136–171 (NNKFIEQQLNNNNNNNNDNEQLTNTLDDVFDLVENQ) adopt a coiled-coil conformation.

Belongs to the class V-like SAM-binding methyltransferase superfamily.

Probable methyltransferase. The chain is SET and MYND domain-containing protein DDB_G0273589 from Dictyostelium discoideum (Social amoeba).